We begin with the raw amino-acid sequence, 805 residues long: Leucine--tRNA ligase (805 aa).

Residues 41–52 carry the 'HIGH' region motif; sequence PYPSGAGLHVGH. Positions 577–581 match the 'KMSKS' region motif; it reads KMSKS. Lys580 contacts ATP.

The protein belongs to the class-I aminoacyl-tRNA synthetase family.

The protein resides in the cytoplasm. The catalysed reaction is tRNA(Leu) + L-leucine + ATP = L-leucyl-tRNA(Leu) + AMP + diphosphate. This Staphylococcus aureus (strain JH1) protein is Leucine--tRNA ligase.